Consider the following 781-residue polypeptide: Aconitate hydratase, mitochondrial (781 aa).

The N-terminal 27 residues, 1–27 (MAPYSLLVTRLQKALGVRQYHVASVLC), are a transit peptide targeting the mitochondrion. Residue Gln-28 is modified to Pyrrolidone carboxylic acid. Position 31 is an N6-succinyllysine (Lys-31). The residue at position 50 (Lys-50) is an N6-acetyllysine; alternate. At Lys-50 the chain carries N6-succinyllysine; alternate. Gln-99 is a binding site for substrate. N6-acetyllysine; alternate is present on residues Lys-138 and Lys-144. Lys-138 and Lys-144 each carry N6-succinyllysine; alternate. 192-194 (DSH) provides a ligand contact to substrate. N6-acetyllysine; alternate is present on Lys-233. Lys-233 carries the N6-succinyllysine; alternate modification. Residue Cys-385 participates in [4Fe-4S] cluster binding. Lys-411 carries the N6-succinyllysine modification. 2 residues coordinate [4Fe-4S] cluster: Cys-448 and Cys-451. Residues Arg-474 and Arg-479 each coordinate substrate. N6-acetyllysine; alternate is present on residues Lys-517 and Lys-523. An N6-succinyllysine; alternate mark is found at Lys-517 and Lys-523. Positions 524–537 (LEAPDADELPRAEF) are enriched in basic and acidic residues. A disordered region spans residues 524–561 (LEAPDADELPRAEFDPGQDTYQHPPKDSSGQRVDVSPT). Residue Lys-549 is modified to N6-succinyllysine. The span at 551–561 (SSGQRVDVSPT) shows a compositional bias: polar residues. The residue at position 559 (Ser-559) is a Phosphoserine. The residue at position 573 (Lys-573) is an N6-acetyllysine; alternate. Lys-573 is modified (N6-succinyllysine; alternate). N6-succinyllysine is present on residues Lys-577 and Lys-591. Lys-605 is subject to N6-acetyllysine; alternate. N6-succinyllysine; alternate is present on Lys-605. Residue Arg-607 participates in substrate binding. The residue at position 628 (Lys-628) is an N6-succinyllysine. A Phosphoserine modification is found at Ser-670. Residue 670–671 (SR) coordinates substrate. Lys-689 is modified (N6-succinyllysine). Residues Lys-723 and Lys-730 each carry the N6-acetyllysine; alternate modification. An N6-succinyllysine; alternate mark is found at Lys-723 and Lys-730. Lys-736, Lys-739, and Lys-743 each carry N6-acetyllysine.

The protein belongs to the aconitase/IPM isomerase family. As to quaternary structure, monomer. [4Fe-4S] cluster serves as cofactor. Post-translationally, forms covalent cross-links mediated by transglutaminase TGM2, between a glutamine and the epsilon-amino group of a lysine residue, forming homopolymers and heteropolymers.

Its subcellular location is the mitochondrion. The catalysed reaction is citrate = D-threo-isocitrate. It participates in carbohydrate metabolism; tricarboxylic acid cycle; isocitrate from oxaloacetate: step 2/2. Functionally, catalyzes the isomerization of citrate to isocitrate via cis-aconitate. This is Aconitate hydratase, mitochondrial (ACO2) from Sus scrofa (Pig).